Reading from the N-terminus, the 470-residue chain is MISVTTLKDRKVALFGLGGSGFATARALVTGGAEVTAWDDNPDSVAKAAAEGIRTEDLRNIDWSQQALFVLSPGVPLTHPKPHWTVDLARAAGVDIVGDVELFVRERRAHAPDCPFIAITGTNGKSTTTALIAHILKSAGYDTQLGGNIGTAVLTLDPPKAERYYVVECSSYQIDLAPTLNPSAGILLNLTPDHLDRHGTMQHYADIKERLVAGSDVAIVGVDDSHSALIADRVERAGVKVVRISRRNVVADGIYAEGTKLIQAAGGAMLPFADLDGIQTLRGSHNAQNAAAAVAACLAVGVSADAIRAGLASFPGLKHRMQPVGQRGRVVFVNDSKATNADAAAPALSSYDRIYWIAGGLPKAGGITTLAPYFPRIAKAYLIGEAAAEFAATLGEAVPYEISGTLERAVAHAAADAERDESAASAVMLSPACASFDQYKNFEVRGEAFVGHVAALDGITMLIGPATGEK.

ATP is bound at residue 121-127 (GTNGKST).

Belongs to the MurCDEF family.

It localises to the cytoplasm. The enzyme catalyses UDP-N-acetyl-alpha-D-muramoyl-L-alanine + D-glutamate + ATP = UDP-N-acetyl-alpha-D-muramoyl-L-alanyl-D-glutamate + ADP + phosphate + H(+). It functions in the pathway cell wall biogenesis; peptidoglycan biosynthesis. Functionally, cell wall formation. Catalyzes the addition of glutamate to the nucleotide precursor UDP-N-acetylmuramoyl-L-alanine (UMA). This chain is UDP-N-acetylmuramoylalanine--D-glutamate ligase, found in Rhizobium johnstonii (strain DSM 114642 / LMG 32736 / 3841) (Rhizobium leguminosarum bv. viciae).